We begin with the raw amino-acid sequence, 104 residues long: Ig lambda-3 chain C region (104 aa).

Residues Pro-6–Ser-99 form the Ig-like domain. A disulfide bridge connects residues Cys-27 and Cys-85.

This Mus musculus (Mouse) protein is Ig lambda-3 chain C region (Iglc3).